Reading from the N-terminus, the 741-residue chain is NAD(P)H-quinone oxidoreductase subunit 5, chloroplastic (741 aa).

The next 16 membrane-spanning stretches (helical) occupy residues 9-29 (WIIP…LLLF), 40-60 (WAFQ…NLSI), 89-109 (IDPL…LVLI), 125-145 (FAYM…SNLI), 147-167 (IYIF…FWFT), 185-205 (GDFG…SFEF), 219-239 (NEVN…GAIA), 258-278 (TPIS…FLVA), 283-303 (LFIV…ITVF), 327-347 (LGYM…FHLI), 354-374 (ALLF…VGYC), 396-416 (NSFL…CFWS), 425-445 (WLYS…TAFY), 549-569 (LFPI…GIHF), 605-625 (VFSV…YKPV), and 721-741 (YLFF…FVNL).

Belongs to the complex I subunit 5 family. In terms of assembly, NDH is composed of at least 16 different subunits, 5 of which are encoded in the nucleus.

It is found in the plastid. The protein localises to the chloroplast thylakoid membrane. The enzyme catalyses a plastoquinone + NADH + (n+1) H(+)(in) = a plastoquinol + NAD(+) + n H(+)(out). It catalyses the reaction a plastoquinone + NADPH + (n+1) H(+)(in) = a plastoquinol + NADP(+) + n H(+)(out). In terms of biological role, NDH shuttles electrons from NAD(P)H:plastoquinone, via FMN and iron-sulfur (Fe-S) centers, to quinones in the photosynthetic chain and possibly in a chloroplast respiratory chain. The immediate electron acceptor for the enzyme in this species is believed to be plastoquinone. Couples the redox reaction to proton translocation, and thus conserves the redox energy in a proton gradient. This Pentatrichia integra (Rock-climbing daisy) protein is NAD(P)H-quinone oxidoreductase subunit 5, chloroplastic (ndhF).